We begin with the raw amino-acid sequence, 293 residues long: MPWIQLRINTNSDDAETISDLLMEEGSVSITFEDGKDTPIFEPKLGETPLWRDTVVVALFDAETDLTPTIAMLKTLPFLGENFSHKVEQIEDKDWVREWMDNFHPIQFGTRLWICPSWREIPDPTAVNVILDPGLAFGTGTHPTTALCLEWLDSLDLSNKEVIDFGCGSGILAVAALKLGAKNVTGIDIDYQAIDASRANAERNDVADKLALYLPEDQPADLKADVLVANILAGPLRELAPLIAERVKTGGKLALSGLLKEQAQEISDFYSQWFDMDVAAHKEDWSRLTGKRK.

4 residues coordinate S-adenosyl-L-methionine: threonine 145, glycine 166, aspartate 188, and asparagine 230.

It belongs to the methyltransferase superfamily. PrmA family.

Its subcellular location is the cytoplasm. It catalyses the reaction L-lysyl-[protein] + 3 S-adenosyl-L-methionine = N(6),N(6),N(6)-trimethyl-L-lysyl-[protein] + 3 S-adenosyl-L-homocysteine + 3 H(+). Methylates ribosomal protein L11. The chain is Ribosomal protein L11 methyltransferase from Shewanella baltica (strain OS185).